We begin with the raw amino-acid sequence, 258 residues long: DNA repair protein RecO (258 aa).

It belongs to the RecO family.

Involved in DNA repair and RecF pathway recombination. This chain is DNA repair protein RecO, found in Desulfatibacillum aliphaticivorans.